The sequence spans 247 residues: tRNA pseudouridine synthase A 1 (247 aa).

Catalysis depends on Asp53, which acts as the Nucleophile. Tyr111 lines the substrate pocket.

Belongs to the tRNA pseudouridine synthase TruA family. In terms of assembly, homodimer.

The catalysed reaction is uridine(38/39/40) in tRNA = pseudouridine(38/39/40) in tRNA. In terms of biological role, formation of pseudouridine at positions 38, 39 and 40 in the anticodon stem and loop of transfer RNAs. In Bacillus cereus (strain ZK / E33L), this protein is tRNA pseudouridine synthase A 1.